A 187-amino-acid chain; its full sequence is Elongation factor P (187 aa).

The protein belongs to the elongation factor P family.

It localises to the cytoplasm. Its pathway is protein biosynthesis; polypeptide chain elongation. Involved in peptide bond synthesis. Stimulates efficient translation and peptide-bond synthesis on native or reconstituted 70S ribosomes in vitro. Probably functions indirectly by altering the affinity of the ribosome for aminoacyl-tRNA, thus increasing their reactivity as acceptors for peptidyl transferase. In Mycobacterium marinum (strain ATCC BAA-535 / M), this protein is Elongation factor P.